Reading from the N-terminus, the 297-residue chain is Ribosomal RNA small subunit methyltransferase H (297 aa).

S-adenosyl-L-methionine-binding positions include 30-32 (GGY), Asp-48, Phe-75, Asp-96, and Gln-103.

It belongs to the methyltransferase superfamily. RsmH family.

Its subcellular location is the cytoplasm. It carries out the reaction cytidine(1402) in 16S rRNA + S-adenosyl-L-methionine = N(4)-methylcytidine(1402) in 16S rRNA + S-adenosyl-L-homocysteine + H(+). Specifically methylates the N4 position of cytidine in position 1402 (C1402) of 16S rRNA. The polypeptide is Ribosomal RNA small subunit methyltransferase H (Ehrlichia canis (strain Jake)).